The following is a 114-amino-acid chain: T cell receptor beta variable 19 (114 aa).

Positions 1 to 21 (MSNQVLCCVVLCLLGANTVDG) are cleaved as a signal peptide. Residues 22–114 (GITQSPKYLF…TAFYLCASSI (93 aa)) form the Ig-like domain. N-linked (GlcNAc...) asparagine glycosylation is present at Asn37. Residues Cys42 and Cys110 are joined by a disulfide bond.

As to quaternary structure, alpha-beta TR is a heterodimer composed of an alpha and beta chain; disulfide-linked. The alpha-beta TR is associated with the transmembrane signaling CD3 coreceptor proteins to form the TR-CD3 (TcR or TCR). The assembly of alpha-beta TR heterodimers with CD3 occurs in the endoplasmic reticulum where a single alpha-beta TR heterodimer associates with one CD3D-CD3E heterodimer, one CD3G-CD3E heterodimer and one CD247 homodimer forming a stable octameric structure. CD3D-CD3E and CD3G-CD3E heterodimers preferentially associate with TR alpha and TR beta chains, respectively. The association of the CD247 homodimer is the last step of TcR assembly in the endoplasmic reticulum and is required for transport to the cell surface. In terms of assembly, (Microbial infection) Interacts with Staphylococcus aureus enterotoxin type B/SEB.

Its subcellular location is the cell membrane. V region of the variable domain of T cell receptor (TR) beta chain that participates in the antigen recognition. Alpha-beta T cell receptors are antigen specific receptors which are essential to the immune response and are present on the cell surface of T lymphocytes. Recognize peptide-major histocompatibility (MH) (pMH) complexes that are displayed by antigen presenting cells (APC), a prerequisite for efficient T cell adaptive immunity against pathogens. Binding of alpha-beta TR to pMH complex initiates TR-CD3 clustering on the cell surface and intracellular activation of LCK that phosphorylates the ITAM motifs of CD3G, CD3D, CD3E and CD247 enabling the recruitment of ZAP70. In turn ZAP70 phosphorylates LAT, which recruits numerous signaling molecules to form the LAT signalosome. The LAT signalosome propagates signal branching to three major signaling pathways, the calcium, the mitogen-activated protein kinase (MAPK) kinase and the nuclear factor NF-kappa-B (NF-kB) pathways, leading to the mobilization of transcription factors that are critical for gene expression and essential for T cell growth and differentiation. The T cell repertoire is generated in the thymus, by V-(D)-J rearrangement. This repertoire is then shaped by intrathymic selection events to generate a peripheral T cell pool of self-MH restricted, non-autoaggressive T cells. Post-thymic interaction of alpha-beta TR with the pMH complexes shapes TR structural and functional avidity. The chain is T cell receptor beta variable 19 from Homo sapiens (Human).